Reading from the N-terminus, the 501-residue chain is Type B diterpene cyclase (501 aa).

This sequence belongs to the terpene synthase family. In terms of assembly, monomer. Mg(2+) serves as cofactor.

It catalyses the reaction geranylgeranyl diphosphate = tuberculosinyl diphosphate. Its activity is regulated as follows. Strongly inhibited by 15-aza-dihydrogeranylgeraniol and 5-isopropyl-N,N,N,2-tetramethyl-4-(piperidine-1-carbonyloxy)benzenaminium chloride (Amo-1618). Inhibited by GGPP concentrations higher than 50 uM. Functionally, catalyzes the formation of tuberculosinyl diphosphate from geranylgeranyl diphosphate (GGPP). It could also react with (14R/S)-14,15-oxidoGGPP to generate 3alpha- and 3beta-hydroxytuberculosinyl diphosphate. The sequence is that of Type B diterpene cyclase from Mycobacterium tuberculosis (strain ATCC 25618 / H37Rv).